The chain runs to 386 residues: Lipoyl synthase, mitochondrial (386 aa).

The transit peptide at 1-21 (MISRNSILLRRLYPTTIIRTL) directs the protein to the mitochondrion. Cys107, Cys112, Cys118, Cys137, Cys141, Cys144, and Ser352 together coordinate [4Fe-4S] cluster. A Radical SAM core domain is found at 122-341 (KKSEATATIM…RDTALDMGFL (220 aa)).

This sequence belongs to the radical SAM superfamily. Lipoyl synthase family. Requires [4Fe-4S] cluster as cofactor.

It localises to the mitochondrion. The catalysed reaction is [[Fe-S] cluster scaffold protein carrying a second [4Fe-4S](2+) cluster] + N(6)-octanoyl-L-lysyl-[protein] + 2 oxidized [2Fe-2S]-[ferredoxin] + 2 S-adenosyl-L-methionine + 4 H(+) = [[Fe-S] cluster scaffold protein] + N(6)-[(R)-dihydrolipoyl]-L-lysyl-[protein] + 4 Fe(3+) + 2 hydrogen sulfide + 2 5'-deoxyadenosine + 2 L-methionine + 2 reduced [2Fe-2S]-[ferredoxin]. The protein operates within protein modification; protein lipoylation via endogenous pathway; protein N(6)-(lipoyl)lysine from octanoyl-[acyl-carrier-protein]: step 2/2. In terms of biological role, catalyzes the radical-mediated insertion of two sulfur atoms into the C-6 and C-8 positions of the octanoyl moiety bound to the lipoyl domains of lipoate-dependent enzymes, thereby converting the octanoylated domains into lipoylated derivatives. This Candida albicans (strain SC5314 / ATCC MYA-2876) (Yeast) protein is Lipoyl synthase, mitochondrial (LAB5).